A 165-amino-acid chain; its full sequence is Transmembrane protein 128 (165 aa).

The next 4 helical transmembrane spans lie at 49–69 (NIHS…VDFF), 81–101 (WFLF…YCIV), 119–139 (LIPI…VALW), and 144–164 (FFTP…TSLL).

It localises to the membrane. The chain is Transmembrane protein 128 (TMEM128) from Bos taurus (Bovine).